A 149-amino-acid polypeptide reads, in one-letter code: Probable conjugal transfer protein TrbE part 1 (149 aa).

The protein belongs to the TrbE/VirB4 family.

This chain is Probable conjugal transfer protein TrbE part 1 (trbEA), found in Sinorhizobium fredii (strain NBRC 101917 / NGR234).